Here is a 286-residue protein sequence, read N- to C-terminus: MSQTNDKPALHLVPSFYGVYILKSIPKPRRTYIGSTPDPKRRLRQHNGDLKVGGAYRTKKDGSRPWTMVVLVHGFPSRIAALQFEHSLQHAYQTRHINNDARITSSSRQSSMHSKLANIRLLTTSFDKMSLKIAIFDEEVYRMWVENKHKIECNVPCTLFKFDEFCNSIQEIDIEDAKNILLGKQLDCMVCKASIDYFKDSTPNISSREELSNYLAKGNYPLIGICGDHAFHLSCIARQRGPAMVPKSVTCTTCGQKLDWSDIIKVSTRLRHYVVQDSLHLAITQL.

Positions 15–98 constitute a GIY-YIG domain; sequence SFYGVYILKS…QHAYQTRHIN (84 aa).

Belongs to the SLX1 family. Forms a heterodimer with SLX4. It depends on a divalent metal cation as a cofactor.

The protein localises to the nucleus. Functionally, catalytic subunit of the SLX1-SLX4 structure-specific endonuclease that resolves DNA secondary structures generated during DNA repair and recombination. Has endonuclease activity towards branched DNA substrates, introducing single-strand cuts in duplex DNA close to junctions with ss-DNA. This is Structure-specific endonuclease subunit SLX1 from Candida dubliniensis (strain CD36 / ATCC MYA-646 / CBS 7987 / NCPF 3949 / NRRL Y-17841) (Yeast).